A 128-amino-acid chain; its full sequence is Large ribosomal subunit protein bL12 (128 aa).

This sequence belongs to the bacterial ribosomal protein bL12 family. As to quaternary structure, homodimer. Part of the ribosomal stalk of the 50S ribosomal subunit. Forms a multimeric L10(L12)X complex, where L10 forms an elongated spine to which 2 to 4 L12 dimers bind in a sequential fashion. Binds GTP-bound translation factors.

Its function is as follows. Forms part of the ribosomal stalk which helps the ribosome interact with GTP-bound translation factors. Is thus essential for accurate translation. This is Large ribosomal subunit protein bL12 from Kocuria rhizophila (strain ATCC 9341 / DSM 348 / NBRC 103217 / DC2201).